The primary structure comprises 174 residues: Large ribosomal subunit protein uL6 (174 aa).

This sequence belongs to the universal ribosomal protein uL6 family. Part of the 50S ribosomal subunit.

This protein binds to the 23S rRNA, and is important in its secondary structure. It is located near the subunit interface in the base of the L7/L12 stalk, and near the tRNA binding site of the peptidyltransferase center. The sequence is that of Large ribosomal subunit protein uL6 from Acidithiobacillus ferrooxidans (strain ATCC 23270 / DSM 14882 / CIP 104768 / NCIMB 8455) (Ferrobacillus ferrooxidans (strain ATCC 23270)).